Consider the following 291-residue polypeptide: ATP synthase gamma chain (291 aa).

Belongs to the ATPase gamma chain family. As to quaternary structure, F-type ATPases have 2 components, CF(1) - the catalytic core - and CF(0) - the membrane proton channel. CF(1) has five subunits: alpha(3), beta(3), gamma(1), delta(1), epsilon(1). CF(0) has three main subunits: a, b and c.

Its subcellular location is the cell inner membrane. In terms of biological role, produces ATP from ADP in the presence of a proton gradient across the membrane. The gamma chain is believed to be important in regulating ATPase activity and the flow of protons through the CF(0) complex. The sequence is that of ATP synthase gamma chain from Ruegeria sp. (strain TM1040) (Silicibacter sp.).